Consider the following 92-residue polypeptide: UPF0250 protein COSY_0496 (92 aa).

This sequence belongs to the UPF0250 family.

The polypeptide is UPF0250 protein COSY_0496 (Vesicomyosocius okutanii subsp. Calyptogena okutanii (strain HA)).